A 271-amino-acid polypeptide reads, in one-letter code: Formamidopyrimidine-DNA glycosylase (271 aa).

Pro-2 functions as the Schiff-base intermediate with DNA in the catalytic mechanism. Glu-3 functions as the Proton donor in the catalytic mechanism. Lys-58 serves as the catalytic Proton donor; for beta-elimination activity. Residues His-91, Arg-110, and Arg-152 each contribute to the DNA site. The FPG-type zinc finger occupies 237–271; the sequence is LVYGREGQPCVHCGRPIRCETIGQRSSYFCTRCQR. Catalysis depends on Arg-261, which acts as the Proton donor; for delta-elimination activity.

It belongs to the FPG family. As to quaternary structure, monomer. Requires Zn(2+) as cofactor.

It catalyses the reaction Hydrolysis of DNA containing ring-opened 7-methylguanine residues, releasing 2,6-diamino-4-hydroxy-5-(N-methyl)formamidopyrimidine.. The enzyme catalyses 2'-deoxyribonucleotide-(2'-deoxyribose 5'-phosphate)-2'-deoxyribonucleotide-DNA = a 3'-end 2'-deoxyribonucleotide-(2,3-dehydro-2,3-deoxyribose 5'-phosphate)-DNA + a 5'-end 5'-phospho-2'-deoxyribonucleoside-DNA + H(+). Involved in base excision repair of DNA damaged by oxidation or by mutagenic agents. Acts as a DNA glycosylase that recognizes and removes damaged bases. Has a preference for oxidized purines, such as 7,8-dihydro-8-oxoguanine (8-oxoG). Has AP (apurinic/apyrimidinic) lyase activity and introduces nicks in the DNA strand. Cleaves the DNA backbone by beta-delta elimination to generate a single-strand break at the site of the removed base with both 3'- and 5'-phosphates. In Syntrophotalea carbinolica (strain DSM 2380 / NBRC 103641 / GraBd1) (Pelobacter carbinolicus), this protein is Formamidopyrimidine-DNA glycosylase.